Reading from the N-terminus, the 185-residue chain is Elongation factor P (185 aa).

The protein belongs to the elongation factor P family.

It localises to the cytoplasm. It participates in protein biosynthesis; polypeptide chain elongation. Its function is as follows. Involved in peptide bond synthesis. Stimulates efficient translation and peptide-bond synthesis on native or reconstituted 70S ribosomes in vitro. Probably functions indirectly by altering the affinity of the ribosome for aminoacyl-tRNA, thus increasing their reactivity as acceptors for peptidyl transferase. The protein is Elongation factor P of Geobacillus thermodenitrificans (strain NG80-2).